The chain runs to 389 residues: Capreomycidine synthase (389 aa).

Lys230 carries the post-translational modification N6-(pyridoxal phosphate)lysine.

The protein belongs to the class-II pyridoxal-phosphate-dependent aminotransferase family. Pyridoxal 5'-phosphate is required as a cofactor.

The catalysed reaction is (2S,3S)-hydroxyarginine = (2S,3R)-capreomycidine + H2O. It participates in antibiotic biosynthesis. Functionally, involved in the biosynthesis of capreomycidine, an unusual amino acid used by non-ribosomal peptide synthases (NRPS) to make the tuberactinomycin class of peptide antibiotic such as viomycin and capreomycin. Catalyzes the dehydration of the C3 hydroxyl of (3S)-hydroxy-(2S)-arginine and the intramolecular cyclization to yield (2S,3R)-capreomycidine. In Streptomyces vinaceus, this protein is Capreomycidine synthase.